A 391-amino-acid polypeptide reads, in one-letter code: MAVKKRSIFEEVGQGAKAPVPQGGSIDRGQGGARRGIRLWLMALFVLVMAMIVVGGLTRLTDSGLSITEWRPVTGAVPPLNEAEWTAEFEKYRQSPQYRLMNAGMSMAEFQRIYWWEWGHRQLGRVIGLVWAVGFLGFLVARKMPRGWWPRLLALGVLGGIQGGIGWWMVASGLEGDRVAVESTRLAVHLSLAFIILGMIAWQALLLGRTEAELFQARRQREGRLYGMTTVLIVVAFLQVVLGALVAGIDAGRGFPTWPDMNGTFLPADMLYVPGVETDWRNPAWWLGLLQNPGFVQFLHRMAGYALVALGLVFWIFGRRTKHRATRGAFDLLALALLAQVALGVGTVLSAAEWQVAIAHQVGAVVIWVLILHARHLAHYPRVGSIRKGTL.

8 helical membrane-spanning segments follow: residues 37–57 (IRLW…VGGL), 121–141 (RQLG…FLVA), 152–172 (LLAL…MVAS), 186–206 (LAVH…QALL), 229–249 (TTVL…VAGI), 298–318 (FLHR…WIFG), 332–352 (LLAL…LSAA), and 354–374 (WQVA…ILHA). H300 lines the heme pocket. H360 contacts heme.

The protein belongs to the COX15/CtaA family. Type 2 subfamily. As to quaternary structure, interacts with CtaB. Requires heme b as cofactor.

It localises to the cell membrane. The enzyme catalyses Fe(II)-heme o + 2 A + H2O = Fe(II)-heme a + 2 AH2. The protein operates within porphyrin-containing compound metabolism; heme A biosynthesis; heme A from heme O: step 1/1. In terms of biological role, catalyzes the conversion of heme O to heme A by two successive hydroxylations of the methyl group at C8. The first hydroxylation forms heme I, the second hydroxylation results in an unstable dihydroxymethyl group, which spontaneously dehydrates, resulting in the formyl group of heme A. This Cereibacter sphaeroides (strain ATCC 17025 / ATH 2.4.3) (Rhodobacter sphaeroides) protein is Heme A synthase.